We begin with the raw amino-acid sequence, 450 residues long: MRIPVDASTSRRFTPPSTALSPGKMSEALPLGAPDGGAALASKLRSGDRSMVEVLADHPGELVRTDSPNFLCSVLPTHWRCNKTLPIAFKVVALGDVPDGTLVTVMAGNDENYSAELRNATAAMKNQVARFNDLRFVGRSGRGKSFTLTITVFTNPPQVATYHRAIKITVDGPREPRRHRQKLDDQTKPGSLSFSERLSELEQLRRTAMRVSPHHPAPTPNPRASLNHSTAFNPQPQSQMQDARQIQPSPPWSYDQSYQYLGSITSSVHPATPISPGRASGMTSLSAELSSRLSTAPDLTAFGDPRQFPTLPSISDPRMHYPGAFTYSPPVTSGIGIGMSAMSSTSRYHTYLPPPYPGSSQAQAGPFQTGSPSYHLYYGTSAGSYQFSMVGGERSPPRILPPCTNASTGAALLNPSLPSQSDVVETEGSHSNSPTNMPPARLEEAVWRPY.

Positions 1–25 are disordered; it reads MRIPVDASTSRRFTPPSTALSPGKM. Residues 7 to 20 show a composition bias toward polar residues; sequence ASTSRRFTPPSTAL. A Phosphothreonine modification is found at Thr14. At Ser21 the chain carries Phosphoserine. An N6-acetyllysine mark is found at Lys24 and Lys43. The Runt domain occupies 50–178; it reads SMVEVLADHP…TVDGPREPRR (129 aa). The segment at 80–84 is interaction with DNA; that stretch reads RCNKT. Chloride contacts are provided by Asn112, Glu116, Arg139, and Val170. Interaction with DNA stretches follow at residues 135–143 and 168–177; these read RFVGRSGRG and ITVDGPREPR. Disordered stretches follow at residues 170 to 195 and 209 to 252; these read VDGPREPRRHRQKLDDQTKPGSLSFS and MRVS…SPPW. Phosphoserine occurs at positions 193 and 212. Positions 222–247 are enriched in polar residues; sequence PRASLNHSTAFNPQPQSQMQDARQIQ. Position 249 is a phosphoserine; by HIPK2 (Ser249). Residues Ser266 and Ser267 each carry the phosphoserine modification. Thr272 bears the Phosphothreonine; by HIPK2 mark. At Ser275 the chain carries Phosphoserine; by HIPK2. The segment at 290–369 is interaction with KAT6A; that stretch reads SSRLSTAPDL…SQAQAGPFQT (80 aa). A Phosphothreonine modification is found at Thr295. Residues 306–398 are interaction with KAT6B; the sequence is RQFPTLPSIS…MVGGERSPPR (93 aa). Positions 360 to 400 are interaction with FOXP3; the sequence is SQAQAGPFQTGSPSYHLYYGTSAGSYQFSMVGGERSPPRIL. The interval 410-450 is disordered; that stretch reads AALLNPSLPSQSDVVETEGSHSNSPTNMPPARLEEAVWRPY. Positions 416–435 are enriched in polar residues; the sequence is SLPSQSDVVETEGSHSNSPT. Ser433 is subject to Phosphoserine. The span at 441–450 shows a compositional bias: basic and acidic residues; the sequence is RLEEAVWRPY.

Heterodimer with CBFB. RUNX1 binds DNA as a monomer and through the Runt domain. DNA-binding is increased by heterodimerization. Interacts with TLE1 and ALYREF/THOC4. Interacts with ELF1, ELF2 and SPI1. Interacts via its Runt domain with the ELF4 N-terminal region. Interaction with ELF2 isoform 2 (NERF-1a) may act to repress RUNX1-mediated transactivation. Interacts with KAT6A and KAT6B. Interacts with SUV39H1, leading to abrogation of transactivating and DNA-binding properties of RUNX1. Interacts with YAP1 and HIPK2. Interaction with CDK6 prevents myeloid differentiation, reducing its transcription transactivation activity. Found in a complex with PRMT5, RUNX1 and CBFB. Interacts with FOXP3. Interacts with TBX21. Interacts with DPF2. Post-translationally, phosphorylated in its C-terminus upon IL-6 treatment. Phosphorylation enhances interaction with KAT6A. Methylated. In terms of processing, phosphorylated in Ser-249 Thr-272 and Ser-275 by HIPK2 when associated with CBFB and DNA. This phosphorylation promotes subsequent EP300 phosphorylation. Expressed in skeletal muscle.

Its subcellular location is the nucleus. Its function is as follows. CBF binds to the core site, 5'-PYGPYGGT-3', of a number of enhancers and promoters, including murine leukemia virus, polyomavirus enhancer, T-cell receptor enhancers, LCK, IL-3 and GM-CSF promoters. The alpha subunit binds DNA and appears to have a role in the development of normal hematopoiesis. Isoform AML-1L interferes with the transactivation activity of RUNX1. Acts synergistically with ELF4 to transactivate the IL-3 promoter and with ELF2 to transactivate the BLK promoter. Inhibits KAT6B-dependent transcriptional activation. Controls the anergy and suppressive function of regulatory T-cells (Treg) by associating with FOXP3. Activates the expression of IL2 and IFNG and down-regulates the expression of TNFRSF18, IL2RA and CTLA4, in conventional T-cells. Positively regulates the expression of RORC in T-helper 17 cells. The protein is Runt-related transcription factor 1 (Runx1) of Rattus norvegicus (Rat).